The chain runs to 473 residues: Bestrophin-4 (473 aa).

Residues 1–31 (MTVSYTLKVAEARFGGFSGLLLRWRGSIYKL) lie on the Cytoplasmic side of the membrane. Residue Ala-10 participates in Ca(2+) binding. A helical transmembrane segment spans residues 32-51 (LYKEFLLFGALYAVLSITYR). Residues 52-60 (LLLTQEQRY) are Extracellular-facing. A helical transmembrane segment spans residues 61–82 (VYAQVARYCNRSADLIPLSFVL). Topologically, residues 83–237 (GFYVTLVVNR…DWISIPLVYT (155 aa)) are cytoplasmic. Residues 238 to 255 (QVVTIAVYSFFALSLVGR) form a helical membrane-spanning segment. Over 256 to 289 (QFVEPEAGAAKPQKLLKPGQEPAPALGDPDMYVP) the chain is Extracellular. The chain crosses the membrane as a helical span at residues 290 to 303 (LTTLLQFFFYAGWL). Over 304–473 (KVAEQIINPF…AESGDEALEP (170 aa)) the chain is Cytoplasmic. The Ca(2+) site is built by Gln-308, Asn-311, Asp-316, and Asp-319. Disordered stretches follow at residues 379–408 (TFNL…PAAQ) and 428–473 (RNFG…ALEP). Positions 396–407 (ASPGSGRPAPAA) are enriched in low complexity. Positions 445–461 (FRAEEGGDPEAAARIEE) are enriched in basic and acidic residues. The segment covering 462–473 (ESAESGDEALEP) has biased composition (acidic residues).

This sequence belongs to the anion channel-forming bestrophin (TC 1.A.46) family. Calcium-sensitive chloride channel subfamily. In terms of tissue distribution, predominantly found in colon and the weakly in fetal brain, spinal cord, retina, lung, trachea, testis and placenta.

It localises to the cell membrane. The enzyme catalyses chloride(in) = chloride(out). It carries out the reaction hydrogencarbonate(in) = hydrogencarbonate(out). Ligand-gated anion channel that allows the movement of anions across cell membranes when activated by Calcium (Ca2+). Mediates the movement of hydrogencarbonate and chloride. The chain is Bestrophin-4 from Homo sapiens (Human).